A 427-amino-acid chain; its full sequence is Mitogen-activated protein kinase 8 (427 aa).

Residues 26-321 (YQNLKPIGSG…VDEALQHPYI (296 aa)) form the Protein kinase domain. ATP is bound by residues 32–40 (IGSGAQGIV) and K55. C116 is modified (S-nitrosocysteine). The Proton acceptor role is filled by D151. T183 is modified (phosphothreonine; by MAP2K7). The short motif at 183-185 (TPY) is the TXY element. Y185 is subject to Phosphotyrosine; by MAP2K4. Phosphoserine is present on residues M301 and S377. Residues 371–427 (VIRGQPSPLGAAVINGSQHPSSSSSVNDVSSMSTDPTLASDTDSSLEAAAGPLGCCR) form a disordered region. Residues 387–403 (SQHPSSSSSVNDVSSMS) show a composition bias toward low complexity. The segment covering 404-415 (TDPTLASDTDSS) has biased composition (polar residues).

This sequence belongs to the protein kinase superfamily. CMGC Ser/Thr protein kinase family. MAP kinase subfamily. As to quaternary structure, forms a complex with MAPK8IP1 and ARHGEF28. Found in a complex with SH3RF1, RAC1, MAP3K11/MLK3, MAP2K7/MKK7 and MAPK8IP1/JIP1. Found in a complex with SH3RF1, RAC2, MAP3K7/TAK1, MAP2K7/MKK7, MAPK8IP1/JIP1 and MAPK9/JNK2. Binds to at least four scaffolding proteins, MAPK8IP1/JIP-1, MAPK8IP2/JIP-2, MAPK8IP3/JIP-3/JSAP1 and SPAG9/MAPK8IP4/JIP-4. These proteins also bind other components of the JNK signaling pathway. Interacts with TP53 and WWOX. Interacts with JAMP. Interacts with HSF1 (via D domain and preferentially with hyperphosphorylated form); this interaction occurs under both normal growth conditions and immediately upon heat shock. Interacts (phosphorylated form) with NFE2; the interaction phosphorylates NFE2 in undifferentiated cells. Interacts with NFATC4. Interacts with MECOM; regulates JNK signaling. Interacts with PIN1; this interaction mediates MAPK8 conformational changes leading to the binding of MAPK8 to its substrates. Interacts with GRIPAP1. Interacts with POU5F1; phosphorylates POU5F1 at 'Ser-355'. Interacts with STMN2, STMN3 and STMN4. Interacts with HSF4. Mg(2+) serves as cofactor. Dually phosphorylated on Thr-183 and Tyr-185 by MAP2K7 and MAP2K4, which activates the enzyme. Phosphorylated by TAOK2. May be phosphorylated at Thr-183 and Tyr-185 by MAP3K1/MEKK1. Phosphorylated form is more concentrated at synapses than none-phosphorylated.

The protein localises to the cytoplasm. It localises to the nucleus. It is found in the synapse. The enzyme catalyses L-seryl-[protein] + ATP = O-phospho-L-seryl-[protein] + ADP + H(+). It catalyses the reaction L-threonyl-[protein] + ATP = O-phospho-L-threonyl-[protein] + ADP + H(+). With respect to regulation, activated by threonine and tyrosine phosphorylation by either of two dual specificity kinases, MAP2K4 and MAP2K7. MAP2K4 shows a strong preference for Tyr-185 while MAP2K7 phosphorylates Tyr-183 preferentially. Inhibited by dual specificity phosphatases, such as DUSP1. Inhibited by SERPINB3. Its function is as follows. Serine/threonine-protein kinase involved in various processes such as cell proliferation, differentiation, migration, transformation and programmed cell death. Extracellular stimuli such as pro-inflammatory cytokines or physical stress stimulate the stress-activated protein kinase/c-Jun N-terminal kinase (SAP/JNK) signaling pathway. In this cascade, two dual specificity kinases MAP2K4/MKK4 and MAP2K7/MKK7 phosphorylate and activate MAPK8/JNK1. In turn, MAPK8/JNK1 phosphorylates a number of transcription factors, primarily components of AP-1 such as JUN, JDP2 and ATF2 and thus regulates AP-1 transcriptional activity. Phosphorylates the replication licensing factor CDT1, inhibiting the interaction between CDT1 and the histone H4 acetylase HBO1 to replication origins. Loss of this interaction abrogates the acetylation required for replication initiation. Promotes stressed cell apoptosis by phosphorylating key regulatory factors including p53/TP53 and Yes-associates protein YAP1. In T-cells, MAPK8 and MAPK9 are required for polarized differentiation of T-helper cells into Th1 cells. Contributes to the survival of erythroid cells by phosphorylating the antagonist of cell death BAD upon EPO stimulation. Mediates starvation-induced BCL2 phosphorylation, BCL2 dissociation from BECN1, and thus activation of autophagy. Phosphorylates STMN2 and hence regulates microtubule dynamics, controlling neurite elongation in cortical neurons. In the developing brain, through its cytoplasmic activity on STMN2, negatively regulates the rate of exit from multipolar stage and of radial migration from the ventricular zone. Phosphorylates several other substrates including heat shock factor protein 4 (HSF4), the deacetylase SIRT1, ELK1, or the E3 ligase ITCH. Phosphorylates the CLOCK-BMAL1 heterodimer and plays a role in the regulation of the circadian clock. Phosphorylates the heat shock transcription factor HSF1, suppressing HSF1-induced transcriptional activity. Phosphorylates POU5F1, which results in the inhibition of POU5F1's transcriptional activity and enhances its proteasomal degradation. Phosphorylates JUND and this phosphorylation is inhibited in the presence of MEN1. In neurons, phosphorylates SYT4 which captures neuronal dense core vesicles at synapses. Phosphorylates EIF4ENIF1/4-ET in response to oxidative stress, promoting P-body assembly. Phosphorylates SIRT6 in response to oxidative stress, stimulating its mono-ADP-ribosyltransferase activity. Phosphorylates NLRP3, promoting assembly of the NLRP3 inflammasome. Phosphorylates ALKBH5 in response to reactive oxygen species (ROS), promoting ALKBH5 sumoylation and inactivation. In terms of biological role, JNK1 isoforms display different binding patterns: beta-1 preferentially binds to c-Jun, whereas alpha-1, alpha-2, and beta-2 have a similar low level of binding to both c-Jun or ATF2. However, there is no correlation between binding and phosphorylation, which is achieved at about the same efficiency by all isoforms. The chain is Mitogen-activated protein kinase 8 (MAPK8) from Homo sapiens (Human).